The sequence spans 323 residues: Pseudouridylate synthase TRUB2, mitochondrial (323 aa).

Residue Asp-98 is the Nucleophile of the active site. The disordered stretch occupies residues 302–323 (SGHQQQLPSAGQPWASRVQAPL).

It belongs to the pseudouridine synthase TruB family. As to quaternary structure, forms a regulatory protein-RNA complex, consisting of RCC1L, NGRN, RPUSD3, RPUSD4, TRUB2, FASTKD2 and 16S mt-rRNA.

Its subcellular location is the mitochondrion matrix. It carries out the reaction a uridine in mRNA = a pseudouridine in mRNA. It catalyses the reaction uridine(55) in tRNA = pseudouridine(55) in tRNA. Its function is as follows. Minor enzyme contributing to the isomerization of uridine to pseudouridine (pseudouridylation) of specific mitochondrial mRNAs (mt-mRNAs) such as COXI and COXIII mt-mRNAs. As a component of a functional protein-RNA module, consisting of RCC1L, NGRN, RPUSD3, RPUSD4, TRUB2, FASTKD2 and 16S mitochondrial ribosomal RNA (16S mt-rRNA), controls 16S mt-rRNA abundance and is required for intra-mitochondrial translation. Also catalyzes pseudouridylation of some tRNAs, including synthesis of pseudouridine(55) from uracil-55, in the psi GC loop of a subset of tRNAs. The sequence is that of Pseudouridylate synthase TRUB2, mitochondrial from Rattus norvegicus (Rat).